The sequence spans 353 residues: ATPase GET3A (353 aa).

27 to 34 lines the ATP pocket; it reads KGGVGKTT. Aspartate 56 is a catalytic residue. Positions 226 and 253 each coordinate ATP. A coiled-coil region spans residues 320-353; it reads TTSRSNVEELERKVHTLRLQLKTAEEELERVKSG.

Belongs to the arsA ATPase family. Homodimer. Interacts with GET1 and GET4.

The protein resides in the cytoplasm. It is found in the cytosol. Its subcellular location is the endoplasmic reticulum. It catalyses the reaction ATP + H2O = ADP + phosphate + H(+). Its function is as follows. ATPase required for the post-translational delivery of tail-anchored (TA) proteins to the endoplasmic reticulum. Recognizes and selectively binds the transmembrane domain of TA proteins in the cytosol. This complex then targets to the endoplasmic reticulum by membrane-bound receptors, where the tail-anchored protein is released for insertion. This process is regulated by ATP binding and hydrolysis. ATP binding drives the homodimer towards the closed dimer state, facilitating recognition of newly synthesized TA membrane proteins. ATP hydrolysis is required for insertion. Subsequently, the homodimer reverts towards the open dimer state, lowering its affinity for the membrane-bound receptor, and returning it to the cytosol to initiate a new round of targeting. Involved in the control of root hair growth through the regulation of syntaxin SYP123 expression. This chain is ATPase GET3A, found in Arabidopsis thaliana (Mouse-ear cress).